The following is an 851-amino-acid chain: DNA mismatch repair protein MutS (851 aa).

An ATP-binding site is contributed by 602 to 609 (GPNMSGKS).

Belongs to the DNA mismatch repair MutS family.

Its function is as follows. This protein is involved in the repair of mismatches in DNA. It is possible that it carries out the mismatch recognition step. This protein has a weak ATPase activity. This chain is DNA mismatch repair protein MutS, found in Streptococcus pyogenes serotype M49 (strain NZ131).